Reading from the N-terminus, the 133-residue chain is NADPH-dependent 7-cyano-7-deazaguanine reductase (133 aa).

Cys-48 functions as the Thioimide intermediate in the catalytic mechanism. The active-site Proton donor is Asp-55. Residues 70–72 (VEL) and 89–90 (QE) contribute to the substrate site.

Belongs to the GTP cyclohydrolase I family. QueF type 1 subfamily.

Its subcellular location is the cytoplasm. The enzyme catalyses 7-aminomethyl-7-carbaguanine + 2 NADP(+) = 7-cyano-7-deazaguanine + 2 NADPH + 3 H(+). Its pathway is tRNA modification; tRNA-queuosine biosynthesis. In terms of biological role, catalyzes the NADPH-dependent reduction of 7-cyano-7-deazaguanine (preQ0) to 7-aminomethyl-7-deazaguanine (preQ1). In Thermoanaerobacter pseudethanolicus (strain ATCC 33223 / 39E) (Clostridium thermohydrosulfuricum), this protein is NADPH-dependent 7-cyano-7-deazaguanine reductase.